The primary structure comprises 739 residues: Long-chain-fatty-acid--CoA ligase ACSBG2 (739 aa).

Residues 287-295 (TSGTTGQPK), 478-483 (ELYGMS), aspartate 556, arginine 571, and lysine 684 contribute to the ATP site.

This sequence belongs to the ATP-dependent AMP-binding enzyme family. Bubblegum subfamily.

The protein localises to the cytoplasm. The catalysed reaction is a long-chain fatty acid + ATP + CoA = a long-chain fatty acyl-CoA + AMP + diphosphate. It catalyses the reaction (5Z,8Z,11Z,14Z)-eicosatetraenoate + ATP + CoA = (5Z,8Z,11Z,14Z)-eicosatetraenoyl-CoA + AMP + diphosphate. The enzyme catalyses hexadecanoate + ATP + CoA = hexadecanoyl-CoA + AMP + diphosphate. It carries out the reaction (9Z)-octadecenoate + ATP + CoA = (9Z)-octadecenoyl-CoA + AMP + diphosphate. The catalysed reaction is (9Z,12Z)-octadecadienoate + ATP + CoA = (9Z,12Z)-octadecadienoyl-CoA + AMP + diphosphate. It catalyses the reaction tetracosanoate + ATP + CoA = tetracosanoyl-CoA + AMP + diphosphate. In terms of biological role, catalyzes the conversion of fatty acids such as long chain and very long-chain fatty acids to their active form acyl-CoAs for both synthesis of cellular lipids, and degradation via beta-oxidation. Can activate diverse saturated, monosaturated and polyunsaturated fatty acids. The chain is Long-chain-fatty-acid--CoA ligase ACSBG2 from Xenopus laevis (African clawed frog).